The primary structure comprises 102 residues: Large ribosomal subunit protein bL21 (102 aa).

Belongs to the bacterial ribosomal protein bL21 family. Part of the 50S ribosomal subunit. Contacts protein L20.

This protein binds to 23S rRNA in the presence of protein L20. In Lactiplantibacillus plantarum (strain ATCC BAA-793 / NCIMB 8826 / WCFS1) (Lactobacillus plantarum), this protein is Large ribosomal subunit protein bL21.